The chain runs to 695 residues: Elongation factor G (695 aa).

The tr-type G domain maps to 8 to 282; that stretch reads EKTRNIGIMA…AVLDYLPAPT (275 aa). GTP is bound by residues 17-24, 81-85, and 135-138; these read AHIDAGKT, DTPGH, and NKMD.

The protein belongs to the TRAFAC class translation factor GTPase superfamily. Classic translation factor GTPase family. EF-G/EF-2 subfamily.

Its subcellular location is the cytoplasm. Its function is as follows. Catalyzes the GTP-dependent ribosomal translocation step during translation elongation. During this step, the ribosome changes from the pre-translocational (PRE) to the post-translocational (POST) state as the newly formed A-site-bound peptidyl-tRNA and P-site-bound deacylated tRNA move to the P and E sites, respectively. Catalyzes the coordinated movement of the two tRNA molecules, the mRNA and conformational changes in the ribosome. This chain is Elongation factor G, found in Listeria innocua serovar 6a (strain ATCC BAA-680 / CLIP 11262).